Here is a 534-residue protein sequence, read N- to C-terminus: UDP-glucuronosyltransferase 1A4 (534 aa).

The N-terminal stretch at 1–28 (MARGLQVPLPRLATGLLLLLSVQPWAES) is a signal peptide. N-linked (GlcNAc...) asparagine glycosylation is found at Asn119, Asn142, Asn296, and Asn348. The chain crosses the membrane as a helical span at residues 492-508 (VIGFLLAVVLTVAFITF).

Belongs to the UDP-glycosyltransferase family. In terms of assembly, homodimer. Homooligomer. Interacts with UGT1A1, UGT1A3, UGT1A6, UGT1A7, UGT1A8, UGT1A9 and UGT1A10 to form heterodimers. Isoform 1 interacts with isoform 2/i2 suggesting that oligomerization is involved in negative regulation of transferase activity by isoform 2. Isoform 1 also interacts with respective i2 isoforms of UGT1A1, UGT1A3, UGT1A6, UGT1A7, UGT1A8, UGT1A9 and UGT1A10. Expressed in liver. Expressed in kidney, colon and small intestine. Not expressed in esophagus. Not expressed in skin. In terms of tissue distribution, expressed in liver, kidney, colon, esophagus and small intestine.

It localises to the endoplasmic reticulum membrane. The catalysed reaction is glucuronate acceptor + UDP-alpha-D-glucuronate = acceptor beta-D-glucuronoside + UDP + H(+). The enzyme catalyses calcidiol + UDP-alpha-D-glucuronate = calcidiol 25-O-(beta-D-glucuronide) + UDP + H(+). It carries out the reaction calcidiol + UDP-alpha-D-glucuronate = calcidiol 3-O-(beta-D-glucuronide) + UDP + H(+). It catalyses the reaction calcitriol + UDP-alpha-D-glucuronate = calcitriol 25-O-(beta-D-glucuronide) + UDP + H(+). The catalysed reaction is (5Z,8Z,11Z,14Z)-eicosatetraenoate + UDP-alpha-D-glucuronate = O-[(5Z),(8Z),(11Z),(14Z)-eicosatetraenoyl]-beta-D-glucuronate + UDP. The enzyme catalyses 15-hydroxy-(5Z,8Z,11Z,13E)-eicosatetraenoate + UDP-alpha-D-glucuronate = 15-O-(beta-D-glucuronosyl)-(5Z,8Z,11Z,14Z)-eicosatetraenoate + UDP + H(+). It carries out the reaction 20-hydroxy-(5Z,8Z,11Z,14Z)-eicosatetraenoate + UDP-alpha-D-glucuronate = 20-O-(beta-D-glucuronosyl)-(5Z,8Z,11Z,14Z)-eicosatetraenoate + UDP + H(+). In terms of biological role, UDP-glucuronosyltransferase (UGT) that catalyzes phase II biotransformation reactions in which lipophilic substrates are conjugated with glucuronic acid to increase the metabolite's water solubility, thereby facilitating excretion into either the urine or bile. Essential for the elimination and detoxification of drugs, xenobiotics and endogenous compounds. Involved in the glucuronidation of calcidiol, which is the major circulating form of vitamin D3 essential for the regulation of calcium and phosphate homeostasis. Also glucuronidates the biologically active form of vitamin D3, calcitriol, probably leading to its biliary transport and intestinal reabsorption. Involved in the glucuronidation of arachidonic acid (AA) and AA-derived eicosanoids including 15-HETE, 20-HETE and PGB1. Functionally, lacks UDP-glucuronosyltransferase (UGT) activity but acts as a negative regulator of isoform 1. This is UDP-glucuronosyltransferase 1A4 from Homo sapiens (Human).